Consider the following 559-residue polypeptide: Polypeptide N-acetylgalactosaminyltransferase 1 (559 aa).

At 1 to 8 the chain is on the cytoplasmic side; it reads MRKFAYCK. Residues 9 to 28 form a helical; Signal-anchor for type II membrane protein membrane-spanning segment; that stretch reads VVLATSLIWVLLDMFLLLYF. Topologically, residues 29-559 are lumenal; it reads SECNKCDEKK…LRNVTLPEIF (531 aa). The interval 45 to 66 is disordered; that stretch reads GDVLEPVQKPHEGPGEMGKPVV. A glycan (N-linked (GlcNAc...) asparagine) is linked at asparagine 95. Intrachain disulfides connect cysteine 106-cysteine 339, cysteine 330-cysteine 408, cysteine 442-cysteine 459, cysteine 482-cysteine 497, and cysteine 523-cysteine 540. A catalytic subdomain A region spans residues 115–225; the sequence is LPTTSVVIVF…VGWLEPLLAR (111 aa). Residues aspartate 156 and arginine 186 each contribute to the substrate site. Positions 209 and 211 each coordinate Mn(2+). The segment at 285-347 is catalytic subdomain B; the sequence is PVRTPTMAGG…TCSHVGHVFR (63 aa). Tryptophan 316 contributes to the substrate binding site. Histidine 344 is a Mn(2+) binding site. 2 residues coordinate substrate: arginine 347 and tyrosine 352. The Ricin B-type lectin domain maps to 429-551; sequence SSLGEIRNVE…GSRSQQWLLR (123 aa). N-linked (GlcNAc...) asparagine glycosylation is present at asparagine 552.

This sequence belongs to the glycosyltransferase 2 family. GalNAc-T subfamily. Mn(2+) is required as a cofactor.

The protein resides in the golgi apparatus. The protein localises to the golgi stack membrane. It localises to the secreted. It catalyses the reaction L-seryl-[protein] + UDP-N-acetyl-alpha-D-galactosamine = a 3-O-[N-acetyl-alpha-D-galactosaminyl]-L-seryl-[protein] + UDP + H(+). The enzyme catalyses L-threonyl-[protein] + UDP-N-acetyl-alpha-D-galactosamine = a 3-O-[N-acetyl-alpha-D-galactosaminyl]-L-threonyl-[protein] + UDP + H(+). The protein operates within protein modification; protein glycosylation. In terms of biological role, catalyzes the initial reaction in O-linked oligosaccharide biosynthesis, the transfer of an N-acetyl-D-galactosamine residue to a serine or threonine residue on the protein receptor. Has a broad spectrum of substrates such as apomucin-, MUC5AC-, MUC1- and MUC2-derived peptides. In Sus scrofa (Pig), this protein is Polypeptide N-acetylgalactosaminyltransferase 1.